We begin with the raw amino-acid sequence, 147 residues long: DNA-directed RNA polymerase subunit 6 homolog (147 aa).

It belongs to the archaeal RpoK/eukaryotic RPB6 RNA polymerase subunit family. Part of the viral DNA-directed RNA polymerase that consists of 8 polII-like subunits (RPB1, RPB2, RPB3, RPB5, RPB6, RPB7, RPB9, RPB10), a capping enzyme and a termination factor.

Its subcellular location is the host cytoplasm. It localises to the virion. Functionally, component of the DNA-directed RNA polymerase (RNAP) that catalyzes the transcription in the cytoplasm of viral DNA into RNA using the four ribonucleoside triphosphates as substrates. The polypeptide is DNA-directed RNA polymerase subunit 6 homolog (Ornithodoros (relapsing fever ticks)).